Reading from the N-terminus, the 84-residue chain is Delta-conotoxin-like MVIB (84 aa).

Residues 1–22 (MKLTCVMIVAVLFLTAWTFVTA) form the signal peptide. A propeptide spanning residues 23–51 (DDSRYGLKDLFPKERHEMKNPEASKLNQR) is cleaved from the precursor. Intrachain disulfides connect cysteine 54–cysteine 69, cysteine 61–cysteine 73, and cysteine 68–cysteine 77. Proline 65 carries the post-translational modification 4-hydroxyproline. Serine amide is present on serine 83.

The protein belongs to the conotoxin O1 superfamily. Expressed by the venom duct.

It localises to the secreted. Delta-conotoxins bind to site 6 of voltage-gated sodium channels (Nav) and inhibit the inactivation process. This chain is Delta-conotoxin-like MVIB, found in Conus magus (Magical cone).